Consider the following 349-residue polypeptide: Protein-glutamate methylesterase/protein-glutamine glutaminase (349 aa).

Positions 5–122 constitute a Response regulatory domain; the sequence is RVLCVDDSAL…REGMLAYSEL (118 aa). Residue Asp-56 is modified to 4-aspartylphosphate. The CheB-type methylesterase domain maps to 152–344; sequence LLSSEKLIAI…QRMLAQISSG (193 aa). Catalysis depends on residues Ser-164, His-190, and Asp-286.

Belongs to the CheB family. Phosphorylated by CheA. Phosphorylation of the N-terminal regulatory domain activates the methylesterase activity.

It localises to the cytoplasm. It carries out the reaction [protein]-L-glutamate 5-O-methyl ester + H2O = L-glutamyl-[protein] + methanol + H(+). The catalysed reaction is L-glutaminyl-[protein] + H2O = L-glutamyl-[protein] + NH4(+). Its function is as follows. Involved in chemotaxis. Part of a chemotaxis signal transduction system that modulates chemotaxis in response to various stimuli. Catalyzes the demethylation of specific methylglutamate residues introduced into the chemoreceptors (methyl-accepting chemotaxis proteins or MCP) by CheR. Also mediates the irreversible deamidation of specific glutamine residues to glutamic acid. The protein is Protein-glutamate methylesterase/protein-glutamine glutaminase of Yersinia pseudotuberculosis serotype I (strain IP32953).